The sequence spans 527 residues: Importin subunit alpha (527 aa).

The IBB domain occupies 1 to 58; the sequence is MSLRPNSRTEARRSRYKVAVDAEEGRRRREDNMVEIRKNKREENLLKKRREGLLQAQQ. ARM repeat units lie at residues 109–151, 152–196, 197–234, 235–279, 280–319, 320–362, 363–403, and 404–445; these read IEEV…TSEN, TKVV…YRDL, VLGH…RGKP, QPLF…DKIQ, AVIE…DDIQ, TQVM…NRNQ, IQIV…GGNH, and DQIK…KIGE.

The protein belongs to the importin alpha family. Forms a complex with importin subunit beta-1.

The protein resides in the cytoplasm. Binds specifically and directly to substrates containing either a simple or bipartite NLS motif. Promotes docking of import substrates to the nuclear envelope. Seems to act as a cytosolic receptor for both simple and bipartite NLS motifs. The polypeptide is Importin subunit alpha (Solanum lycopersicum (Tomato)).